The sequence spans 315 residues: Triosephosphate isomerase, chloroplastic (315 aa).

A chloroplast-targeting transit peptide spans 1 to 60 (MAATSLTAPPSFSGLRRISPKLDAAAVSSHQSFFHRVNSSTRLVSSSSSSHRSPRGVVAM). Asn71 and Lys73 together coordinate substrate. Residue His155 is the Electrophile of the active site. Residue Ser178 is modified to Phosphoserine. Residue Glu225 is the Proton acceptor of the active site.

The protein belongs to the triosephosphate isomerase family. Homodimer.

The protein localises to the plastid. Its subcellular location is the chloroplast. It catalyses the reaction D-glyceraldehyde 3-phosphate = dihydroxyacetone phosphate. It participates in carbohydrate biosynthesis; Calvin cycle. The chain is Triosephosphate isomerase, chloroplastic (TIM) from Arabidopsis thaliana (Mouse-ear cress).